The following is a 114-amino-acid chain: Transcription initiation factor IIB (114 aa).

Tandem repeats lie at residues 1–17 (VEQK…AQEL) and 28–109 (QYVP…EQIE).

Belongs to the TFIIB family.

Stabilizes TBP binding to an archaeal box-A promoter. Also responsible for recruiting RNA polymerase II to the pre-initiation complex (DNA-TBP-TFIIB). The polypeptide is Transcription initiation factor IIB (tfb) (Haloarcula vallismortis (Halobacterium vallismortis)).